The primary structure comprises 166 residues: Bacterial microcompartment shell protein EutK (166 aa).

In terms of domain architecture, BMC spans 4–88 (ALGLLEVDGM…PDDDTQWLVT (85 aa)). Positions 109 to 165 (ESADELLALLTSVRQGMTAGEVAAHFGWPLEKARNALEQLFSAGTLRKRSSRYRLKP) constitute a EutK-Ctail domain.

It belongs to the bacterial microcompartments protein family. As to quaternary structure, monomeric in solution.

The protein localises to the bacterial microcompartment. Its pathway is amine and polyamine degradation; ethanolamine degradation. Probably a minor component of the bacterial microcompartment (BMC) shell dedicated to ethanolamine degradation. It might bind nucleic acids. This Escherichia coli (strain K12) protein is Bacterial microcompartment shell protein EutK (eutK).